The following is a 120-amino-acid chain: Small ribosomal subunit protein uS13 (120 aa).

Residues arginine 93–lysine 120 form a disordered region. Basic residues predominate over residues alanine 107–lysine 120.

Belongs to the universal ribosomal protein uS13 family. As to quaternary structure, part of the 30S ribosomal subunit. Forms a loose heterodimer with protein S19. Forms two bridges to the 50S subunit in the 70S ribosome.

Its function is as follows. Located at the top of the head of the 30S subunit, it contacts several helices of the 16S rRNA. In the 70S ribosome it contacts the 23S rRNA (bridge B1a) and protein L5 of the 50S subunit (bridge B1b), connecting the 2 subunits; these bridges are implicated in subunit movement. Contacts the tRNAs in the A and P-sites. In Helicobacter acinonychis (strain Sheeba), this protein is Small ribosomal subunit protein uS13.